A 229-amino-acid chain; its full sequence is Protein GLC8 (229 aa).

3 disordered regions span residues 1 to 21 (MGGI…QQDP), 35 to 62 (TQKN…EIIG), and 107 to 229 (QFQD…TKEP). Serine 12 carries the post-translational modification Phosphoserine. The segment covering 107 to 117 (QFQDIHIDEPK) has biased composition (basic and acidic residues). Threonine 118 bears the Phosphothreonine; by PHO85 mark. Serine 158 carries the phosphoserine modification. The span at 164–173 (FEIKENKQPD) shows a compositional bias: basic and acidic residues. The span at 175-184 (ETNDENDEDS) shows a compositional bias: acidic residues. Residue serine 184 is modified to Phosphoserine. Residues 185 to 196 (PEARHKKFEEMR) show a composition bias toward basic and acidic residues.

Post-translationally, phosphorylated by the cyclin-CDKs PCL6-PHO85 and PCL7-PHO85. Phosphorylation of Thr-118 inactivates GLC8.

Its function is as follows. Modulator of GLC7 type-1 protein phosphatase. The protein is Protein GLC8 (GLC8) of Saccharomyces cerevisiae (strain ATCC 204508 / S288c) (Baker's yeast).